An 83-amino-acid chain; its full sequence is Small ribosomal subunit protein bS16 (83 aa).

Belongs to the bacterial ribosomal protein bS16 family.

This Shewanella halifaxensis (strain HAW-EB4) protein is Small ribosomal subunit protein bS16.